The following is a 386-amino-acid chain: Oxysterol-binding protein-related protein 4A (386 aa).

This sequence belongs to the OSBP family. In terms of tissue distribution, expressed in roots, stems and flowers.

Functionally, may be involved in the transport of sterols. The chain is Oxysterol-binding protein-related protein 4A (ORP4A) from Arabidopsis thaliana (Mouse-ear cress).